The following is a 736-amino-acid chain: Serine/threonine-protein kinase BRSK2 (736 aa).

The Protein kinase domain occupies 19-270 (YRLEKTLGKG…LEHIQKHIWY (252 aa)). Residues 25 to 33 (LGKGQTGLV) and lysine 48 contribute to the ATP site. Aspartate 141 functions as the Proton acceptor in the catalytic mechanism. Position 174 is a phosphothreonine; by LKB1 (threonine 174). Threonine 260 is modified (phosphothreonine; by PKA). Position 294 is a phosphoserine (serine 294). Residues 297-339 (DIDPDVLDSMHSLGCFRDRNKLLQDLLSEEENQEKMIYFLLLD) enclose the UBA domain. Positions 345–366 (PSQEDEDLPPRNEIDPPRKRVD) are enriched in basic and acidic residues. Disordered stretches follow at residues 345-475 (PSQE…GVPW) and 493-513 (HRRK…PESS). A phosphoserine mark is found at serine 367, serine 382, serine 393, serine 412, alanine 416, serine 423, and serine 427. The span at 410-428 (SRSISGASSGLSTSPLSSP) shows a compositional bias: low complexity. Positions 431-445 (TPHPSPRGSPLPTPK) are enriched in pro residues. Residue serine 455 is modified to Phosphoserine. Residues threonine 459, threonine 463, and threonine 509 each carry the phosphothreonine modification. A phosphoserine mark is found at serine 512, serine 513, and serine 520. Residues 603-605 (KEN) carry the KEN box motif. Positions 681–736 (KNGQAAQAPSTPAKRSAHGPLGDSAAAGPGPGGDAEYPTGKDTAKMGPPTARREQP) are disordered. The span at 699 to 708 (GPLGDSAAAG) shows a compositional bias: low complexity.

The protein belongs to the protein kinase superfamily. CAMK Ser/Thr protein kinase family. SNF1 subfamily. As to quaternary structure, interacts with FZR1, a regulatory subunit of the APC ubiquitin ligase complex. Interacts with COPS5. Interacts with PAK1. Requires Mg(2+) as cofactor. Post-translationally, phosphorylated at Thr-174 by STK11/LKB1 in complex with STE20-related adapter-alpha (STRADA) pseudo kinase and CAB39. Not phosphorylated at Thr-174 by CaMKK2. In contrast, it is phosphorylated and activated by CaMKK1. May be inactivated via dephosphorylation of Thr-174 by PP2C. Phosphorylated at Thr-260 by PKA. Phosphorylation at Thr-260 by PKA was not observed in another study, but this may reflect differences in the experimental approach. Phosphorylation at Thr-260 seems to play a role in the regulation of insulin secretion. In terms of processing, polyubiquitinated by the APC complex in conjunction with FZR1, leading to its proteasomal degradation. Targeted for proteasomal degradation by interaction with COPS5. BRSK2 levels change during the cell cycle. BRSK2 levels are low at the G1/S boundary and gradually increase as cells progress into G2 phase. BRSK2 levels decrease rapidly at the end of mitosis. In terms of tissue distribution, detected in pancreas islets (at protein level).

Its subcellular location is the cytoplasm. It localises to the cytoskeleton. The protein resides in the microtubule organizing center. The protein localises to the centrosome. It is found in the perinuclear region. Its subcellular location is the endoplasmic reticulum. It catalyses the reaction L-seryl-[protein] + ATP = O-phospho-L-seryl-[protein] + ADP + H(+). The catalysed reaction is L-threonyl-[protein] + ATP = O-phospho-L-threonyl-[protein] + ADP + H(+). It carries out the reaction L-seryl-[tau protein] + ATP = O-phospho-L-seryl-[tau protein] + ADP + H(+). The enzyme catalyses L-threonyl-[tau protein] + ATP = O-phospho-L-threonyl-[tau protein] + ADP + H(+). Its activity is regulated as follows. Activated by phosphorylation on Thr-174 by STK11/LKB1. In terms of biological role, serine/threonine-protein kinase that plays a key role in polarization of neurons and axonogenesis, cell cycle progress and insulin secretion. Phosphorylates CDK16, CDC25C, MAPT/TAU, PAK1 and WEE1. Following phosphorylation and activation by STK11/LKB1, acts as a key regulator of polarization of cortical neurons, probably by mediating phosphorylation of microtubule-associated proteins such as MAPT/TAU at 'Thr-529' and 'Ser-579'. Also regulates neuron polarization by mediating phosphorylation of WEE1 at 'Ser-642' in postmitotic neurons, leading to down-regulate WEE1 activity in polarized neurons. Plays a role in the regulation of the mitotic cell cycle progress and the onset of mitosis. Plays a role in the regulation of insulin secretion in response to elevated glucose levels, probably via phosphorylation of CDK16 and PAK1. While BRSK2 phosphorylated at Thr-174 can inhibit insulin secretion, BRSK2 phosphorylated at Thr-260 can promote insulin secretion. Regulates reorganization of the actin cytoskeleton. May play a role in the apoptotic response triggered by endoplasmic reticulum (ER) stress. In Homo sapiens (Human), this protein is Serine/threonine-protein kinase BRSK2 (BRSK2).